We begin with the raw amino-acid sequence, 127 residues long: Evasin-4 (127 aa).

Residues 1-23 (MAFKYWFVFAAVLYARQWLSTKC) form the signal peptide. 4 disulfide bridges follow: C50–C69, C65–C112, C86–C117, and C107–C126. N-linked (GlcNAc...) asparagine glycosylation is found at N54, N64, N70, N77, N83, N106, and N114.

It belongs to the evasin C8 family. Monomer.

The protein resides in the secreted. In terms of biological role, salivary chemokine-binding protein which has chemokine-neutralizing activity and binds to host chemokines CCL1, CCL3, CCL5, CCL7, CCL8, CCL11, CCL14, CCL15, CCL16, CCL17, CCL18, CCL19, CCL21, CCL22, CCL23, CCL24, CCL25 and CCL26 with nanomolar affinity. Binds to CCL3 and CCL5 with 1:1 stoichiometry. Although binding to CCL25 is observed, does not inhibit CCL25-induced chemotaxis. Has been shown to reduce cardiac injury and inflammation in mice through its anti-CCL5 activity. The sequence is that of Evasin-4 from Rhipicephalus sanguineus (Brown dog tick).